The sequence spans 84 residues: UPF0473 protein CLJ_B2791 (84 aa).

This sequence belongs to the UPF0473 family.

The chain is UPF0473 protein CLJ_B2791 from Clostridium botulinum (strain 657 / Type Ba4).